Reading from the N-terminus, the 1256-residue chain is MRKTPSHTEKKMVYSIRSLKNGTGSVLIGASLVLLAMATPTISSDESTPTTNEPNNRNTTTLAQPLTDTAADSGKNESDISSPRNANASLEKTEEKPATEPTTSTSPVTTETKAEEPIEDNYFRIHVKKLPEENKDAQGLWTWDDVEKPSENWPNGALSFKDAKKDDYGYYLDVKLKGEQAKKISFLINNTAGKNLTGDKSVEKLVPKMNEAWLDQDYKVFSYEPQPAGTVRVNYYRTDGNYDKKSLWYWGDVKNPSSAQWPDGTDFTATGKYGRYIDIPLNEAAREFGFLLLDESKQGDDVKIRKENYKFTDLKNHSQIFLKDDDESIYTNPYYVHDIRMTGAQHVGTSSIESSFSTLVGAKKEDILKHSNITNHLGNKVTITDVAIDEAGKKVTYSGDFSDTKHPYTVSYNSDQFTTKTSWHLKDETYSYDGKLGADLKEEGKQVDLTLWSPSADKVSVVVYDKNDPDKVVGTVALEKGERGTWKQTLDSTNKLGITDFTGYYYQYQIERQGKTVLALDPYAKSLAAWNSDDAKIDDAHKVAKAAFVDPAKLGPQDLTYGKIHNFKTREDAVIYEAHVRDFTSDPAIAKDLTKPFGTFEAFIEKLDYLKDLGVTHIQLLPVLSYYFVNELKNHERLSDYASSNSNYNWGYDPQNYFSLTGMYSSDPKNPEKRIAEFKNLINEIHKRGMGAILDVVYNHTAKVDIFEDLEPNYYHFMDADGTPRTSFGGGRLGTTHHMTKRLLVDSIKYLVDTYKVDGFRFDMMGDHDAASIEEAYKAARALNPNLIMLGEGWRTYAGDENMPTKAADQDWMKHTDTVAVFSDDIRNNLKSGYPNEGQPAFITGGKRDVNTIFKNLIAQPTNFEADSPGDVIQYIAAHDNLTLFDIIAQSIKKDPSKAENYAEIHRRLRLGNLMVLTAQGTPFIHSGQEYGRTKQFRDPAYKTPVAEDKVPNKSHLLRDKDGNPFDYPYFIHDSYDSSDAVNKFDWTKATDGKAYPENVKSRDYMKGLIALRQSTDAFRLKSLQDIKDRVHLITVPGQNGVEKEDVVIGYQITAPNGDIYAVFVNADEKAREFNLGTAFAHLRNAEVLADENQAGSVGIANPKGLEWTEKGLKLNALTATVLRVSQNGTSHESTAEEKPDSTPSKPEHQDPAPEARPDSTKPDAKVADAENKPSQATADSQAEQPAQEAQASSVKEAVQNESVENSSKKNIPATPDRQAELPNTGIKNENKLLFAGISLLALLGLGFLLKNKKEN.

Residues 1 to 44 form the signal peptide; sequence MRKTPSHTEKKMVYSIRSLKNGTGSVLIGASLVLLAMATPTISS. The disordered stretch occupies residues 42–117; it reads ISSDESTPTT…VTTETKAEEP (76 aa). Residues 48–61 are compositionally biased toward low complexity; that stretch reads TPTTNEPNNRNTTT. Residues 79–90 are compositionally biased toward polar residues; sequence DISSPRNANASL. Low complexity predominate over residues 99–111; sequence TEPTTSTSPVTTE. Substrate contacts are provided by residues 141–143, Trp-153, Asp-199, 248–250, Trp-261, Lys-303, and Asn-308; these read WTW and WYW. Ser-646 and Tyr-648 together coordinate Ca(2+). Substrate contacts are provided by residues 652 to 653 and Phe-728; that span reads YD. Asp-763 functions as the Nucleophile in the catalytic mechanism. The Proton donor role is filled by Glu-792. Residue Trp-794 participates in substrate binding. The Ca(2+) site is built by Met-813, Thr-816, and Asp-817. Substrate is bound by residues Asp-824, Arg-827, and Tyr-834. Residues Asp-867 and Asp-871 each coordinate Ca(2+). Substrate-binding positions include Asn-881, Lys-954, and 974–976; that span reads DSY. Asp-977 serves as a coordination point for Ca(2+). The segment at 1126-1224 is disordered; it reads SQNGTSHEST…TPDRQAELPN (99 aa). Basic and acidic residues predominate over residues 1134-1172; that stretch reads STAEEKPDSTPSKPEHQDPAPEARPDSTKPDAKVADAEN. The span at 1181–1194 shows a compositional bias: low complexity; that stretch reads SQAEQPAQEAQASS. Positions 1200 to 1210 are enriched in polar residues; sequence QNESVENSSKK. The short motif at 1222-1226 is the LPXTG sorting signal element; sequence LPNTG. Thr-1225 is subject to Pentaglycyl murein peptidoglycan amidated threonine. The propeptide at 1226 to 1256 is removed by sortase; the sequence is GIKNENKLLFAGISLLALLGLGFLLKNKKEN.

Belongs to the glycosyl hydrolase 13 family.

It is found in the secreted. It localises to the cell wall. The protein resides in the cell surface. It catalyses the reaction Hydrolysis of (1-&gt;6)-alpha-D-glucosidic linkages in pullulan, amylopectin and glycogen, and in the alpha- and beta-limit dextrins of amylopectin and glycogen.. With respect to regulation, inhibited by 4-O-alpha-D-glucopyranosylmoranoline (G1M). Functionally, virulence factor. Involved in the degradation of glycogen of the mammalian host cells. Hydrolyzes the alpha-1,6-branchpoints of glycogen. Hydrolyzes pullulan. Does not hydrolyze dextran. Binds to mouse lung alveolar type II cells that are rich in glycogen stores. Is an alpha-glucan-specific carbohydrate-binding protein, which binds to amylose (pure alpha-(1,4)-linked glucose), amylopectin (alpha-(1,4)-linked glucose with alpha-(1,6) branch points), pullulan (linear polymer of mixed alpha-(1,4)- and alpha-(1,6)-linked glucose) and glycogen (similar to amylopectin with more frequent alpha-(1,6) branch points) in vitro. Does not bind to dextran (a linear polymer of alpha-(1,6)-linked glucose). In Streptococcus pneumoniae serotype 2 (strain D39 / NCTC 7466), this protein is Pullulanase A.